We begin with the raw amino-acid sequence, 23 residues long: Cysteine proteinase (23 aa).

Over residues 1 to 10 the composition is skewed to basic and acidic residues; the sequence is ADSLDWREKG. A disordered region spans residues 1-23; the sequence is ADSLDWREKGVVNSIKDQAQXGS.

It belongs to the peptidase C1 family.

The sequence is that of Cysteine proteinase from Tritrichomonas foetus (Trichomonas foetus).